Consider the following 306-residue polypeptide: Agmatinase (306 aa).

Positions 126, 149, 151, 153, 230, and 232 each coordinate Mn(2+).

It belongs to the arginase family. Agmatinase subfamily. The cofactor is Mn(2+).

The enzyme catalyses agmatine + H2O = urea + putrescine. It functions in the pathway amine and polyamine biosynthesis; putrescine biosynthesis via agmatine pathway; putrescine from agmatine: step 1/1. In terms of biological role, catalyzes the formation of putrescine from agmatine. In Salmonella dublin (strain CT_02021853), this protein is Agmatinase.